The chain runs to 389 residues: Chalcone synthase 4 (389 aa).

The active site involves Cys-164.

This sequence belongs to the thiolase-like superfamily. Chalcone/stilbene synthases family.

It catalyses the reaction (E)-4-coumaroyl-CoA + 3 malonyl-CoA + 3 H(+) = 2',4,4',6'-tetrahydroxychalcone + 3 CO2 + 4 CoA. The protein operates within secondary metabolite biosynthesis; flavonoid biosynthesis. In terms of biological role, the primary product of this enzyme is 4,2',4',6'-tetrahydroxychalcone (also termed naringenin-chalcone or chalcone) which can under specific conditions spontaneously isomerize into naringenin. This Medicago sativa (Alfalfa) protein is Chalcone synthase 4 (CHS4).